We begin with the raw amino-acid sequence, 399 residues long: MAHITLNQYLQQVLEAIDSRDGSFCAEMMSFKHPHVANPRLQLSSPEEKCQQLLEPPYDEMVAAHLRCTFAVSNHDFVEAYKCQTVVVQSFLKAFQAHKEENWALPIMFAVTLDLRIFANNAEQHLQQKGKGKVGDMLEKAAEQLMSCFRVCASDNRAGIDDSKKWGMLFLINQLFKIYFKINKLHLCKPLIRAIDSSNLKDEYTMAQRVTYKYYVGRKAMFDSDFKPAEECLSFSFTHCHRSCQRNKRLILIYLLPVKMLLGHMPTHQLLKKYDLMQFADVTRAVSEGNLLLLNAALVKHETFFIRCGIFLILEKLKIITYRNLFKKVYHLLRTHQLPLAAFLVSLQMTKVEDVDIDEVQCILANLIYMGHIKGYISHQHQKLVVSKQNPFPPLSSIS.

A PCI domain is found at 210–391; sequence VTYKYYVGRK…QKLVVSKQNP (182 aa).

It belongs to the CSN12 family.

This is PCI domain-containing protein 2 (pcid2) from Danio rerio (Zebrafish).